A 264-amino-acid polypeptide reads, in one-letter code: Aminoglycoside 3'-phosphotransferase (264 aa).

D190 functions as the Proton acceptor in the catalytic mechanism.

It belongs to the aminoglycoside phosphotransferase family.

It catalyses the reaction kanamycin A + ATP = kanamycin 3'-phosphate + ADP + H(+). Its function is as follows. Resistance to kanamycin and structurally-related aminoglycosides, including amikacin. This Enterococcus faecalis (Streptococcus faecalis) protein is Aminoglycoside 3'-phosphotransferase (aphA).